The primary structure comprises 320 residues: Nicotianamine synthase 2 (320 aa).

It belongs to the nicotianamine synthase (NAS)-like family.

The enzyme catalyses 3 S-adenosyl-L-methionine = nicotianamine + 3 S-methyl-5'-thioadenosine + 3 H(+). Functionally, synthesizes nicotianamine, a polyamine which serves as a sensor for the physiological iron status within the plant, and/or might be involved in the transport of iron. This chain is Nicotianamine synthase 2 (NAS2), found in Arabidopsis thaliana (Mouse-ear cress).